The chain runs to 744 residues: Dolasta-1(15),8-diene synthase (744 aa).

The tract at residues 1 to 344 (MASTMMNYQD…RRYNPAAPLP (344 aa)) is terpene cyclase. Mg(2+) is bound by residues aspartate 108 and aspartate 112. Residues aspartate 108, aspartate 112, 198-201 (RHYD), 246-250 (SWDKE), and 336-337 (RY) contribute to the substrate site. The DDXXD motif lies at 108 to 112 (DDLTD). Residues 345 to 744 (RREDIGKVNG…LHLITFQLKV (400 aa)) are prenyltransferase. The interval 399-422 (YTTMTPAETSSDDKKKKAKASHET) is disordered. Over residues 409–422 (SDDKKKKAKASHET) the composition is skewed to basic and acidic residues. Residues arginine 459 and histidine 488 each contribute to the isopentenyl diphosphate site. Residues aspartate 495 and aspartate 499 each coordinate Mg(2+). The DDXXD motif lies at 495 to 499 (DDVQD). Arginine 504 is a binding site for dimethylallyl diphosphate. Position 505 (arginine 505) interacts with isopentenyl diphosphate. Residues lysine 581, threonine 582, and glutamine 617 each contribute to the dimethylallyl diphosphate site.

The protein in the N-terminal section; belongs to the terpene synthase family. This sequence in the C-terminal section; belongs to the FPP/GGPP synthase family. In terms of assembly, hexamer. Requires Mg(2+) as cofactor.

It carries out the reaction isopentenyl diphosphate + (2E,6E)-farnesyl diphosphate = (2E,6E,10E)-geranylgeranyl diphosphate + diphosphate. The catalysed reaction is (2E,6E,10E)-geranylgeranyl diphosphate = (5R,12R,14S)-dolasta-1(15),8-diene + diphosphate. The enzyme catalyses (2E,6E,10E)-geranylgeranyl diphosphate = delta-araneosene + diphosphate. Bifunctional terpene synthase involved in the biosynthesis of the diterpenes delta-araneosene and dolasta-1(15),8-diene. The C-terminal prenyltransferase domain of CgDS catalyzes formation of the universal precursor of diterpene, geranylgeranyl diphosphate (GGPP), whereas the N-terminal terpene cyclase domain catalyzes the cyclization of GGPP to the intermediate delta-araneosene that is further converted to dolasta-1(15),8-diene in a second cyclization event. In some cases the cyclization stops at the delta-araneosene stage. In Colletotrichum gloeosporioides (Anthracnose fungus), this protein is Dolasta-1(15),8-diene synthase.